The sequence spans 318 residues: Methionine import ATP-binding protein MetN (318 aa).

Residues 2-237 enclose the ABC transporter domain; that stretch reads IEIKDVGKIF…PEGELKKIIE (236 aa). 34 to 41 serves as a coordination point for ATP; the sequence is GRSGAGKS.

It belongs to the ABC transporter superfamily. Methionine importer (TC 3.A.1.24) family. The complex is composed of two ATP-binding proteins (MetN), two transmembrane proteins (MetI) and a solute-binding protein (MetQ).

The protein resides in the cell membrane. It carries out the reaction L-methionine(out) + ATP + H2O = L-methionine(in) + ADP + phosphate + H(+). The enzyme catalyses D-methionine(out) + ATP + H2O = D-methionine(in) + ADP + phosphate + H(+). Part of the ABC transporter complex MetNIQ involved in methionine import. Responsible for energy coupling to the transport system. The polypeptide is Methionine import ATP-binding protein MetN (Clostridium tetani (strain Massachusetts / E88)).